The primary structure comprises 110 residues: MLVILRSVVLFVLAAVAEIGGAWLVWQGVREQRGLLWIGAGVIALGIYGFVATFQPDPNFGRILAAYGGVFVAGSLLWGVVVDGFRPDRWDLIGATICLAGVAVIMYAPR.

A run of 4 helical transmembrane segments spans residues 8–28, 34–54, 63–83, and 89–109; these read VVLFVLAAVAEIGGAWLVWQG, GLLWIGAGVIALGIYGFVATF, ILAAYGGVFVAGSLLWGVVVD, and RWDLIGATICLAGVAVIMYAP.

It belongs to the UPF0060 family.

It is found in the cell membrane. This chain is UPF0060 membrane protein SACE_5620, found in Saccharopolyspora erythraea (strain ATCC 11635 / DSM 40517 / JCM 4748 / NBRC 13426 / NCIMB 8594 / NRRL 2338).